Consider the following 721-residue polypeptide: MAEKFESLMNIHGFDLGSRYMDLKPLGCGGNGLVFSAVDNDCDKRVAIKKIVLTDPQSVKHALREIKIIRRLDHDNIVKVFEILGPSGSQLTDDVGSLTELNSVYIVQEYMETDLANVLEQGPLLEEHARLFMYQLLRGLKYIHSANVLHRDLKPANLFINTEDLVLKIGDFGLARIMDPHYSHKGHLSEGLVTKWYRSPRLLLSPNNYTKAIDMWAAGCIFAEMLTGKTLFAGAHELEQMQLILESIPVVHEEDRQELLSVIPVYIRNDMTEPHKPLTQLLPGISREALDFLEQILTFSPMDRLTAEEALSHPYMSIYSFPMDEPISSHPFHIEDEVDDILLMDETHSHIYNWERYHDCQFSEHDWPVHNNFDIDEVQLDPRALSDVTDEEEVQVDPRKYLDGDREKYLEDPAFDTNYSTEPCWQYSDHHENKYCDLECSHTCNYKTRSSSYLDNLVWRESEVNHYYEPKLIIDLSNWKEQSKEKSDKKGKSKCERNGLVKAQIALEEASQQLAGKEREKNQGFDFDSFIAGTIQLSSQHEPTDVVDKLNDLNSSVSQLELKSLISKSVSQEKQEKGMANLAQLEALYQSSWDSQFVSGGEDCFFINQFCEVRKDEQVEKENTYTSYLDKFFSRKEDTEMLETEPVEDGKLGERGHEEGFLNNSGEFLFNKQLESIGIPQFHSPVGSPLKSIQATLTPSAMKSSPQIPHQTYSSILKHLN.

Residue M1 forms a Peptide (Met-Gly) (interchain with G-Cter in ubiquitin) linkage. Positions 20-316 (YMDLKPLGCG…AEEALSHPYM (297 aa)) constitute a Protein kinase domain. Residues 26–34 (LGCGGNGLV) and K49 each bind ATP. D152 serves as the catalytic Proton acceptor. S189 carries the phosphoserine; by PAK1, PAK2 and PAK3 modification. An SEG motif motif is present at residues 189-191 (SEG). The FRIEDE motif motif lies at 332–337 (FHIEDE). Phosphoserine occurs at positions 386, 452, 556, 558, 665, and 684. Over residues 701-715 (AMKSSPQIPHQTYSS) the composition is skewed to polar residues. The tract at residues 701–721 (AMKSSPQIPHQTYSSILKHLN) is disordered.

Belongs to the protein kinase superfamily. CMGC Ser/Thr protein kinase family. MAP kinase subfamily. Heterodimer with ERK4/MAPK4. Interacts with (via FRIEDE motif) MAPKAPK5. Interacts with UBE3A; this interaction may be indirect and mediated by HERC2, possibly via HERC2 interaction with NEURL4. Requires Mg(2+) as cofactor. In terms of processing, phosphorylated at Ser-189 by PAK1, PAK2 and PAK3 resulting in catalytic activation. Phosphorylated by MAPKAPK5 at other sites. Post-translationally, ubiquitination at Met-1 leads to degradation by the proteasome pathway. As to expression, highest expression in the skeletal muscle, followed by the brain. Also found in heart, placenta, lung, liver, pancreas, kidney and skin fibroblasts.

The protein localises to the cytoplasm. It localises to the nucleus. It catalyses the reaction L-seryl-[protein] + ATP = O-phospho-L-seryl-[protein] + ADP + H(+). The catalysed reaction is L-threonyl-[protein] + ATP = O-phospho-L-threonyl-[protein] + ADP + H(+). With respect to regulation, activated by phosphorylation at Ser-189. In terms of biological role, atypical MAPK protein. Phosphorylates microtubule-associated protein 2 (MAP2) and MAPKAPK5. The precise role of the complex formed with MAPKAPK5 is still unclear, but the complex follows a complex set of phosphorylation events: upon interaction with atypical MAPKAPK5, ERK3/MAPK6 is phosphorylated at Ser-189 and then mediates phosphorylation and activation of MAPKAPK5, which in turn phosphorylates ERK3/MAPK6. May promote entry in the cell cycle. This chain is Mitogen-activated protein kinase 6 (MAPK6), found in Homo sapiens (Human).